A 324-amino-acid polypeptide reads, in one-letter code: Glyoxylate/hydroxypyruvate reductase B (324 aa).

Residues Arg237 and Glu266 contribute to the active site. His285 acts as the Proton donor in catalysis.

It belongs to the D-isomer specific 2-hydroxyacid dehydrogenase family. GhrB subfamily. Homodimer.

It is found in the cytoplasm. The enzyme catalyses glycolate + NADP(+) = glyoxylate + NADPH + H(+). The catalysed reaction is (R)-glycerate + NAD(+) = 3-hydroxypyruvate + NADH + H(+). It carries out the reaction (R)-glycerate + NADP(+) = 3-hydroxypyruvate + NADPH + H(+). Functionally, catalyzes the NADPH-dependent reduction of glyoxylate and hydroxypyruvate into glycolate and glycerate, respectively. The protein is Glyoxylate/hydroxypyruvate reductase B of Escherichia coli O17:K52:H18 (strain UMN026 / ExPEC).